A 126-amino-acid chain; its full sequence is Protein ApaG (126 aa).

The ApaG domain occupies 2-126; sequence TSLEDSIKVE…FRLAVPGMLH (125 aa).

This Shewanella sediminis (strain HAW-EB3) protein is Protein ApaG.